A 120-amino-acid polypeptide reads, in one-letter code: uncharacterized protein (120 aa).

This is an uncharacterized protein from Escherichia coli O6:H1 (strain CFT073 / ATCC 700928 / UPEC).